The following is an 883-amino-acid chain: Ankyrin repeat and SAM domain-containing protein 6 (883 aa).

10 ANK repeats span residues 8–37 (PGLQ…DPVA), 68–97 (AGNS…SVNS), 101–130 (YGWS…DVNA), 134–163 (LGAS…IVDH), 181–210 (LGIT…DPNH), 215–244 (VGWS…NPDH), 282–312 (KRRP…HVNL), 316–345 (DGAT…DMDK), 350–379 (HGWT…DVAL), and 383–414 (NGYT…QVNK). The interval 30–50 (EPGADPVAGPEAGAEPAGPEA) is disordered. 4 disordered regions span residues 414–439 (KDRG…IPVL), 490–522 (MRAP…RREK), 566–773 (SHTC…ITDE), and 852–883 (SFES…SSRR). Basic and acidic residues predominate over residues 566-576 (SHTCHNGKADP). A compositionally biased stretch (low complexity) spans 607–630 (PSISRSPASPASSGSFNHSPHSSG). Over residues 631-640 (GASGIGGMSR) the composition is skewed to gly residues. Position 649 is a phosphoserine (S649). Over residues 649 to 661 (SGGSVDSVLSQIA) the composition is skewed to polar residues. 2 stretches are compositionally biased toward low complexity: residues 687-711 (SSSP…PSSS) and 720-737 (PPSG…TLTP). Phosphoserine occurs at positions 732 and 740. Residues 748-768 (SSVSSSSSHRQSKSSGGSSSG) show a composition bias toward low complexity. Residues 771 to 834 (TDEDELTGIL…LAAISELNAG (64 aa)) form the SAM domain. Positions 852 to 862 (SFESSASNTRA) are enriched in polar residues. Residues 874–883 (RPEETVSSRR) are compositionally biased toward basic and acidic residues.

In terms of assembly, homooligomer. Interacts with NEK8. Central component of a complex containing at least ANKS6, INVS, NEK8 and NPHP3. ANKS6 may organize complex assembly by linking INVS and NPHP3 to NEK8 and INVS may target the complex to the proximal ciliary axoneme. Interacts (via SAM domain) with BICC1 (via KH domains) in an RNA-dependent manner. Interacts (via SAM domain) with ANKS3 (via SAM domain). Hydroxylated at Asn-129, most probably by HIF1AN. This hydroxylation results in decreased NEK8-binding. As to expression, expressed in kidney (at protein level).

The protein localises to the cell projection. Its subcellular location is the cilium. It localises to the cytoplasm. In terms of biological role, required for renal function. This chain is Ankyrin repeat and SAM domain-containing protein 6 (Anks6), found in Mus musculus (Mouse).